Consider the following 493-residue polypeptide: D-glyceraldehyde dehydrogenase (NADP(+)) (493 aa).

Positions 70–92 (RAKELIEKNRAELENIIMEENGK) form a coiled coil. Residues 146 to 149 (TPWN), R157, 172 to 176 (KPSSD), 204 to 210 (RGSEIGD), 225 to 248 (GSTA…ILEL), C281, and 381 to 383 (EIF) each bind NADP(+). Residues N149 and R157 each contribute to the substrate site. E247 acts as the Proton acceptor in catalysis. Substrate is bound at residue C281. C281 (proton donor) is an active-site residue.

It belongs to the aldehyde dehydrogenase family. Glyceraldehyde dehydrogenase subfamily. Homotetramer. Dimer of dimers.

It catalyses the reaction D-glyceraldehyde + NADP(+) + H2O = (R)-glycerate + NADPH + 2 H(+). It functions in the pathway carbohydrate degradation; glycolysis. With respect to regulation, inhibited by calcium, cadmium, copper and mercury ions. Stable for 2 hours at 60 degrees Celsius but activity is decreased to less than 50 percent within 20 minutes at 80 degrees Celsius. Two folds activity enhancement in the presence of 1 mM glutathione, DTT, or 2-mercaptoethanol. Complete activity inhibition by thiol-modifying reagents such as p-chloromercuribenzoic acid or p-hydroxy-mercuribenzoic acid. In terms of biological role, NADP-dependent dehydrogenase of the nED (non-phosphorylated Entner-Doudoroff) pathway with highest activity towards glyceraldehydes (e.g. D,L-glyceraldehyde and D-glyceraldehyde), to a lesser extent towards D,L-glyceraldehyde-3-phosphate and glycolaldehyde, but no activity towards aliphatic or aromatic aldehydes. The sequence is that of D-glyceraldehyde dehydrogenase (NADP(+)) from Thermoplasma acidophilum (strain ATCC 25905 / DSM 1728 / JCM 9062 / NBRC 15155 / AMRC-C165).